Consider the following 105-residue polypeptide: Larval cuticle protein 65Ag1 (105 aa).

Residues 1–18 (MKFLIVFVALFAVALAAP) form the signal peptide. In terms of domain architecture, Chitin-binding type R&amp;R spans 34–103 (PESFKYDWET…PQGAHLPVAP (70 aa)).

Functionally, component of the cuticle of the larva. This chain is Larval cuticle protein 65Ag1, found in Drosophila melanogaster (Fruit fly).